Here is a 427-residue protein sequence, read N- to C-terminus: GTPase Obg (427 aa).

The 158-residue stretch at 1 to 158 (MFVDQVKIYV…RDVTLELKVL (158 aa)) folds into the Obg domain. The 171-residue stretch at 159–329 (ADVGLVGFPS…LLFEVANLLE (171 aa)) folds into the OBG-type G domain. GTP is bound by residues 165–172 (GFPSVGKS), 190–194 (FTTIV), 212–215 (DLPG), 282–285 (NKMD), and 310–312 (SAV). Mg(2+)-binding residues include Ser-172 and Thr-192. The region spanning 349 to 427 (YKFESESNFE…ILEYQFEFID (79 aa)) is the OCT domain.

The protein belongs to the TRAFAC class OBG-HflX-like GTPase superfamily. OBG GTPase family. As to quaternary structure, monomer. Requires Mg(2+) as cofactor.

Its subcellular location is the cytoplasm. Its function is as follows. An essential GTPase which binds GTP, GDP and possibly (p)ppGpp with moderate affinity, with high nucleotide exchange rates and a fairly low GTP hydrolysis rate. Plays a role in control of the cell cycle, stress response, ribosome biogenesis and in those bacteria that undergo differentiation, in morphogenesis control. The chain is GTPase Obg from Bacillus mycoides (strain KBAB4) (Bacillus weihenstephanensis).